The chain runs to 349 residues: 4-hydroxy-3-methylbut-2-en-1-yl diphosphate synthase (flavodoxin) (349 aa).

Residues C264, C267, C299, and E306 each coordinate [4Fe-4S] cluster.

It belongs to the IspG family. [4Fe-4S] cluster serves as cofactor.

The enzyme catalyses (2E)-4-hydroxy-3-methylbut-2-enyl diphosphate + oxidized [flavodoxin] + H2O + 2 H(+) = 2-C-methyl-D-erythritol 2,4-cyclic diphosphate + reduced [flavodoxin]. Its pathway is isoprenoid biosynthesis; isopentenyl diphosphate biosynthesis via DXP pathway; isopentenyl diphosphate from 1-deoxy-D-xylulose 5-phosphate: step 5/6. Functionally, converts 2C-methyl-D-erythritol 2,4-cyclodiphosphate (ME-2,4cPP) into 1-hydroxy-2-methyl-2-(E)-butenyl 4-diphosphate. The chain is 4-hydroxy-3-methylbut-2-en-1-yl diphosphate synthase (flavodoxin) from Clostridium perfringens (strain 13 / Type A).